We begin with the raw amino-acid sequence, 122 residues long: Large ribosomal subunit protein uL14 (122 aa).

This sequence belongs to the universal ribosomal protein uL14 family. In terms of assembly, part of the 50S ribosomal subunit. Forms a cluster with proteins L3 and L19. In the 70S ribosome, L14 and L19 interact and together make contacts with the 16S rRNA in bridges B5 and B8.

Functionally, binds to 23S rRNA. Forms part of two intersubunit bridges in the 70S ribosome. This is Large ribosomal subunit protein uL14 from Saccharopolyspora erythraea (strain ATCC 11635 / DSM 40517 / JCM 4748 / NBRC 13426 / NCIMB 8594 / NRRL 2338).